Reading from the N-terminus, the 175-residue chain is Urease accessory protein UreE (175 aa).

Positions 151–175 (GGAYGGSPSHAHRHSHVHSHSHETP) are disordered. The span at 160-169 (HAHRHSHVHS) shows a compositional bias: basic residues.

The protein belongs to the UreE family.

The protein localises to the cytoplasm. In terms of biological role, involved in urease metallocenter assembly. Binds nickel. Probably functions as a nickel donor during metallocenter assembly. The sequence is that of Urease accessory protein UreE from Synechococcus sp. (strain WH7805).